Reading from the N-terminus, the 858-residue chain is MVNFTVDQIRAIMDKKANIRNMSVIAHVDHGKSTLTDSLVCKAGIIASARAGETRFTDTRKDEQERCITIKSTAISLFYELSENDLNFIKQSKDGAGFLINLIDSPGHVDFSSEVTAALRVTDGALVVVDCVSGVCVQTETVLRQAIAERIKPVLMMNKMDRALLELQLEPEELYQTFQRIVENVNVIISTYGEGESGPMGNIMIDPVLGTVGFGSGLHGWAFTLKQFAEMYVAKFAAKGEGQLGPAERAKKVEDMMKKLWGDRYFDPATGKFSKSASSPDGKKLPRTFCQLILDPIFKVFDAIMNFKKEETAKLIEKLDIKLDSEDKDKEGKPLLKAVMRRWLPAGDALLQMITIHLPSPVTAQKYRCELLYEGPPDDEAAMGIKSCDPKGPLMMYISKMVPTSDKGRFYAFGRVFSGLVSTGLKVRIMGPNYTPGKKEDLYLKPIQRTILMMGRYVEPIEDVPCGNIVGLVGVDQFLVKTGTITTFEHAHNMRVMKFSVSPVVRVAVEAKNPADLPKLVEGLKRLAKSDPMVQCIIEESGEHIIAGAGELHLEICLKDLEEDHACIPIKKSDPVVSYRETVSEESNVLCLSKSPNKHNRLYMKARPFPDGLAEDIDKGEVSARQELKQRARYLAEKYEWDVAEARKIWCFGPDGTGPNILTDITKGVQYLNEIKDSVVAGFQWATKEGALCEENMRGVRFDVHDVTLHADAIHRGGGQIIPTARRCLYASVLTAQPRLMEPIYLVEIQCPEQVVGGIYGVLNRKRGHVFEESQVAGTPMFVVKAYLPVNESFGFTADLRSNTGGQAFPQCVFDHWQILPGDPFDNTSRPSQVVAETRKRKGLKEGIPALDNFLDKL.

Residues 17 to 362 (ANIRNMSVIA…MITIHLPSPV (346 aa)) form the tr-type G domain. 26 to 33 (AHVDHGKS) is a binding site for GTP. At threonine 54 the chain carries Phosphothreonine. The residue at position 57 (threonine 57) is a Phosphothreonine; by EEF2K. Threonine 59 carries the phosphothreonine modification. An N6-succinyllysine modification is found at lysine 152. Residues 158–161 (NKMD) and 216–218 (SGL) each bind GTP. Lysine 235 is subject to N6-acetyllysine. An N6-acetyllysine; alternate modification is found at lysine 239. Residue lysine 239 forms a Glycyl lysine isopeptide (Lys-Gly) (interchain with G-Cter in SUMO1); alternate linkage. Phosphotyrosine; by CSK is present on tyrosine 265. Position 272 is an N6-acetyllysine; alternate (lysine 272). The residue at position 272 (lysine 272) is an N6-succinyllysine; alternate. An N6-acetyllysine modification is found at lysine 275. A Glycyl lysine isopeptide (Lys-Gly) (interchain with G-Cter in SUMO) cross-link involves residue lysine 322. A Phosphoserine modification is found at serine 325. Tyrosine 373 bears the Phosphotyrosine; by CSK mark. Threonine 435 is modified (phosphothreonine). N6-acetyllysine is present on residues lysine 439 and lysine 445. Serine 502 bears the Phosphoserine mark. At lysine 525 the chain carries N6,N6,N6-trimethyllysine; by EEF2KMT. Lysine 529 participates in a covalent cross-link: Glycyl lysine isopeptide (Lys-Gly) (interchain with G-Cter in SUMO). The residue at position 572 (lysine 572) is an N6-succinyllysine. Serine 595 carries the post-translational modification Phosphoserine; by CDK2. Lysine 619 is modified (N6-acetyllysine). Histidine 715 carries the post-translational modification Diphthamide.

The protein belongs to the TRAFAC class translation factor GTPase superfamily. Classic translation factor GTPase family. EF-G/EF-2 subfamily. In terms of assembly, binds to 80S ribosomes. Actively translating ribosomes show mutually exclusive binding of eIF5a (EIF5A or EIF5A2) and EEF2/eEF2. Interacts with SERBP1; interaction sequesters EEF2/eEF2 at the A-site of the ribosome, thereby blocking the interaction sites of the mRNA-tRNA complex, promoting ribosome stabilization and hibernation. Interacts with HABP4; interaction takes place at the A-site of hibernating ribosomes and promotes ribosome stabilization. Component of the mRNA surveillance SURF complex, at least composed of ERF1, ERF3 (ERF3A or ERF3B), EEF2, UPF1/RENT1, SMG1, SMG8 and SMG9. Interacts with RBPMS2. Post-translationally, phosphorylation by EF-2 kinase completely inactivates EF-2; it requires prior phosphorylation by CDK2 at Ser-595 during mitotic prometaphase. Phosphorylation by CSK promotes SUMOylation, proteolytic cleavage, and nuclear translocation if the C-terminal fragment. Diphthamide is 2-[3-carboxyamido-3-(trimethyl-ammonio)propyl]histidine. In terms of processing, ISGylated. Post-translationally, proteolytically processed at two sites following phosphorylation by CSK. SUMOylated following phosphorylation by CSK, promotes proteolytic cleavage.

The protein localises to the cytoplasm. It localises to the nucleus. The enzyme catalyses GTP + H2O = GDP + phosphate + H(+). In terms of biological role, catalyzes the GTP-dependent ribosomal translocation step during translation elongation. During this step, the ribosome changes from the pre-translocational (PRE) to the post-translocational (POST) state as the newly formed A-site-bound peptidyl-tRNA and P-site-bound deacylated tRNA move to the P and E sites, respectively. Catalyzes the coordinated movement of the two tRNA molecules, the mRNA and conformational changes in the ribosome. This chain is Elongation factor 2 (EEF2), found in Callithrix jacchus (White-tufted-ear marmoset).